The primary structure comprises 34 residues: Non-toxic venom protein (34 aa).

The LCN-type CS-alpha/beta domain occupies 1 to 34 (KEGYPTNSEGCKITXLFNDPYCKGXCINLSTQAD).

Expressed by the venom gland.

Its subcellular location is the secreted. Does not cause symptoms of intoxication, paralysis or death in insects (A.domestica). The chain is Non-toxic venom protein from Rhopalurus junceus (Caribbean blue scorpion).